Reading from the N-terminus, the 221-residue chain is Translation initiation factor 6 (221 aa).

It belongs to the eIF-6 family.

Functionally, binds to the 50S ribosomal subunit and prevents its association with the 30S ribosomal subunit to form the 70S initiation complex. In Nitrosopumilus maritimus (strain SCM1), this protein is Translation initiation factor 6.